Reading from the N-terminus, the 446-residue chain is Phosphoglucosamine mutase (446 aa).

S101 (phosphoserine intermediate) is an active-site residue. S101, D240, D242, and D244 together coordinate Mg(2+). Phosphoserine is present on S101.

This sequence belongs to the phosphohexose mutase family. It depends on Mg(2+) as a cofactor. Post-translationally, activated by phosphorylation.

It carries out the reaction alpha-D-glucosamine 1-phosphate = D-glucosamine 6-phosphate. In terms of biological role, catalyzes the conversion of glucosamine-6-phosphate to glucosamine-1-phosphate. The sequence is that of Phosphoglucosamine mutase from Coxiella burnetii (strain Dugway 5J108-111).